Reading from the N-terminus, the 211-residue chain is Uracil phosphoribosyltransferase (211 aa).

5-phospho-alpha-D-ribose 1-diphosphate contacts are provided by residues R78, R103, and 130 to 138; that span reads DPMLATGGS. Residues I193 and 198–200 contribute to the uracil site; that span reads GDA. D199 lines the 5-phospho-alpha-D-ribose 1-diphosphate pocket.

It belongs to the UPRTase family. Mg(2+) serves as cofactor.

The enzyme catalyses UMP + diphosphate = 5-phospho-alpha-D-ribose 1-diphosphate + uracil. Its pathway is pyrimidine metabolism; UMP biosynthesis via salvage pathway; UMP from uracil: step 1/1. With respect to regulation, allosterically activated by GTP. Its function is as follows. Catalyzes the conversion of uracil and 5-phospho-alpha-D-ribose 1-diphosphate (PRPP) to UMP and diphosphate. This chain is Uracil phosphoribosyltransferase, found in Hahella chejuensis (strain KCTC 2396).